The primary structure comprises 184 residues: 20.9 kDa protein (184 aa).

The chain is 20.9 kDa protein from Zymomonas mobilis subsp. mobilis (strain ATCC 10988 / DSM 424 / LMG 404 / NCIMB 8938 / NRRL B-806 / ZM1).